Here is a 243-residue protein sequence, read N- to C-terminus: Juxtaposed with another zinc finger protein 1 (243 aa).

Residues 12–37 form a C2H2-type 1 zinc finger; sequence NTCRFGGCGLHFPTLADLIEHIEDNH. The tract at residues 39 to 79 is required for interaction with NR2C2; sequence DTDPRVLEKQELQQPTYVALSYINRFMTDAARREQESLKKK. A compositionally biased stretch (polar residues) spans 89-108; that stretch reads SSSVSRGNVSTPPRHSSGSL. Residues 89–151 are disordered; the sequence is SSSVSRGNVS…SDSDESWTTE (63 aa). Residues Thr-109 and Thr-113 each carry the phosphothreonine modification. The segment covering 118-130 has biased composition (low complexity); that stretch reads PSSSFRSSTPTGS. The segment covering 131 to 148 has biased composition (acidic residues); it reads EYDEEEVDYEESDSDESW. The C2H2-type 2 zinc finger occupies 173-198; that stretch reads FACPVPGCKKRYKNVNGIKYHAKNGH. Residues 208 to 230 form a C2H2-type 3; degenerate zinc finger; the sequence is FKCRCGKSYKTAQGLRHHTINFH.

Interacts with NR2C2 (via ligand-binding region). As to expression, expressed in range of tissues with highest expression levels in testis, liver, muscle and fat and lowest levels in kidney. Detected in liver and white adipose tissue (at protein level).

The protein resides in the nucleus. In terms of biological role, acts as a transcriptional corepressor of orphan nuclear receptor NR2C2. Inhibits expression of the gluconeogenesis enzyme PCK2 through inhibition of NR2C2 activity. Also involved in transcriptional activation of NAMPT by promoting expression of PPARA and PPARD. Plays a role in lipid metabolism by suppressing lipogenesis, increasing lipolysis and decreasing lipid accumulation in adipose tissue. Plays a role in glucose homeostasis by improving glucose metabolism and insulin sensitivity. The sequence is that of Juxtaposed with another zinc finger protein 1 (Jazf1) from Mus musculus (Mouse).